Here is a 92-residue protein sequence, read N- to C-terminus: Em-like protein GEA6 (92 aa).

Composition is skewed to basic and acidic residues over residues 1–18 and 37–51; these read MASQ…KKGE and AEGR…KEQL. Residues 1–92 are disordered; sequence MASQQEKKQL…IDESKFRTKT (92 aa).

The protein belongs to the small hydrophilic plant seed protein family. As to expression, present only in nearly dry and dry seeds.

Its function is as follows. It is thought to provide protection for the cytoplasm during the desiccation stage of embryo development. The chain is Em-like protein GEA6 (EM6) from Arabidopsis thaliana (Mouse-ear cress).